Consider the following 361-residue polypeptide: 3,6-anhydro-alpha-L-galactonate cycloisomerase (361 aa).

Lys166 serves as the catalytic Proton acceptor. Positions 195, 221, and 247 each coordinate Mg(2+). The Proton donor/acceptor role is filled by His297.

It belongs to the mandelate racemase/muconate lactonizing enzyme family. It depends on Mg(2+) as a cofactor.

The catalysed reaction is 3,6-anhydro-L-galactonate = 2-dehydro-3-deoxy-L-galactonate. In terms of biological role, involved in the degradation of 3,6-anhydro-L-galactose, which is the major monomeric sugar of red macroalgae. Catalyzes the isomerization of 3,6-anhydrogalactonate (AHGA) to 2-keto-3-deoxy-galactonate (KDGal). In Streptomyces coelicolor (strain ATCC BAA-471 / A3(2) / M145), this protein is 3,6-anhydro-alpha-L-galactonate cycloisomerase.